Here is a 982-residue protein sequence, read N- to C-terminus: Pentatricopeptide repeat-containing protein At5g62370 (982 aa).

PPR repeat units follow at residues 94-129 (DSSCYGALIRKLTEMGQPGVAETFYNQRVIGNGIVP), 130-164 (DSSVLDSMVFCLVKLRRFDEARAHLDRIIASGYAP), 165-199 (SRNSSSLVVDELCNQDRFLEAFHCFEQVKERGSGL), 200-234 (WLWCCKRLFKGLCGHGHLNEAIGMLDTLCGMTRMP), 236-270 (PVNLYKSLFYCFCKRGCAAEAEALFDHMEVDGYYV), 271-305 (DKVMYTCLMKEYCKDNNMTMAMRLYLRMVERSFEL), 306-340 (DPCIFNTLIHGFMKLGMLDKGRVMFSQMIKKGVQS), 341-376 (NVFTYHIMIGSYCKEGNVDYALRLFVNNTGSEDISR), 377-411 (NVHCYTNLIFGFYKKGGMDKAVDLLMRMLDNGIVP), 412-446 (DHITYFVLLKMLPKCHELKYAMVILQSILDNGCGI), 476-510 (AAVGLAVVTTALCSQRNYIAALSRIEKMVNLGCTP), 511-545 (LPFSYNSVIKCLFQENIIEDLASLVNIIQELDFVP), 546-580 (DVDTYLIVVNELCKKNDRDAAFAIIDAMEELGLRP), 581-615 (TVAIYSSIIGSLGKQGRVVEAEETFAKMLESGIQP), 616-650 (DEIAYMIMINTYARNGRIDEANELVEEVVKHFLRP), 651-685 (SSFTYTVLISGFVKMGMMEKGCQYLDKMLEDGLSP), 686-720 (NVVLYTALIGHFLKKGDFKFSFTLFGLMGENDIKH), 721-755 (DHIAYITLLSGLWRAMARKKKRQVIVEPGKEKLLQ), 759-789 (RTKPLVSIPSSLGNYGSKSFAMEVIGKVKKS), 793-827 (NLYLHNTIITGYCAAGRLDEAYNHLESMQKEGIVP), 828-858 (NLVTYTILMKSHIEAGDIESAIDLFEGTNCE), 860-894 (DQVMYSTLLKGLCDFKRPLDALALMLEMQKSGINP), 895-929 (NKDSYEKLLQCLCYSRLTMEAVKVVKDMAALDIWP), and 930-964 (RSINHTWLIYILCEEKKLREARALFAIMVQSGRSL).

Belongs to the PPR family. P subfamily.

The sequence is that of Pentatricopeptide repeat-containing protein At5g62370 from Arabidopsis thaliana (Mouse-ear cress).